Reading from the N-terminus, the 311-residue chain is Dermonecrotic toxin LlSicTox-alphaIII1i (311 aa).

Positions 1-21 (MYAHLALILGCWTVVLQGAET) are cleaved as a signal peptide. Positions 22 to 26 (DVGER) are excised as a propeptide. The active site involves histidine 38. Residues glutamate 58 and aspartate 60 each coordinate Mg(2+). The active-site Nucleophile is histidine 73. Cysteines 77 and 83 form a disulfide. Aspartate 117 lines the Mg(2+) pocket.

The protein belongs to the arthropod phospholipase D family. Class I subfamily. Mg(2+) serves as cofactor. Expressed by the venom gland.

The protein resides in the secreted. It carries out the reaction an N-(acyl)-sphingosylphosphocholine = an N-(acyl)-sphingosyl-1,3-cyclic phosphate + choline. The catalysed reaction is an N-(acyl)-sphingosylphosphoethanolamine = an N-(acyl)-sphingosyl-1,3-cyclic phosphate + ethanolamine. The enzyme catalyses a 1-acyl-sn-glycero-3-phosphocholine = a 1-acyl-sn-glycero-2,3-cyclic phosphate + choline. It catalyses the reaction a 1-acyl-sn-glycero-3-phosphoethanolamine = a 1-acyl-sn-glycero-2,3-cyclic phosphate + ethanolamine. Functionally, dermonecrotic toxins cleave the phosphodiester linkage between the phosphate and headgroup of certain phospholipids (sphingolipid and lysolipid substrates), forming an alcohol (often choline) and a cyclic phosphate. This toxin acts on sphingomyelin (SM) with high activity. It also act on acyl- and alkyl-lysophosphatidylcholine (LPC), but not on sphingosylphosphorylcholine (SPC) and phosphatidylcholine (PC). It may also act on ceramide phosphoethanolamine (CPE), and lysophosphatidylethanolamine (LPE), but not on lysophosphatidylserine (LPS), and lysophosphatidylglycerol (LPG). It acts by transphosphatidylation, releasing exclusively cyclic phosphate products as second products. Induces complement-dependent hemolysis and dermonecrosis. Also induces increased vascular permeability, edema, inflammatory response, and platelet aggregation. This is Dermonecrotic toxin LlSicTox-alphaIII1i from Loxosceles laeta (South American recluse spider).